The primary structure comprises 277 residues: Pantothenate synthetase (277 aa).

Position 26 to 33 (26 to 33 (MGYLHQGH)) interacts with ATP. Residue His-33 is the Proton donor of the active site. Gln-57 serves as a coordination point for (R)-pantoate. Residue Gln-57 coordinates beta-alanine. An ATP-binding site is contributed by 143 to 146 (GQKD). (R)-pantoate is bound at residue Gln-149. Residues Val-172 and 180–183 (LSSR) contribute to the ATP site.

The protein belongs to the pantothenate synthetase family. As to quaternary structure, homodimer.

It localises to the cytoplasm. The enzyme catalyses (R)-pantoate + beta-alanine + ATP = (R)-pantothenate + AMP + diphosphate + H(+). Its pathway is cofactor biosynthesis; (R)-pantothenate biosynthesis; (R)-pantothenate from (R)-pantoate and beta-alanine: step 1/1. Catalyzes the condensation of pantoate with beta-alanine in an ATP-dependent reaction via a pantoyl-adenylate intermediate. The protein is Pantothenate synthetase of Chloroflexus aggregans (strain MD-66 / DSM 9485).